The primary structure comprises 421 residues: Heterogeneous nuclear ribonucleoprotein 27C (421 aa).

2 consecutive RRM domains span residues 7–88 (GKLF…RTLQ) and 96–173 (YKVF…KAEP). Disordered stretches follow at residues 171-191 (AEPR…GGAY) and 240-373 (GTSP…SEYD). Residue Ser-177 is modified to Phosphoserine. A compositionally biased stretch (polar residues) spans 240-250 (GTSPQQQQYGY). Over residues 264 to 273 (PPGPQGPPPQ) the composition is skewed to pro residues. Over residues 275 to 284 (SNYAGPQQTQ) the composition is skewed to polar residues. A compositionally biased stretch (low complexity) spans 293-302 (NSTSTGAPSG). Residues Ser-366, Ser-368, and Ser-370 each carry the phosphoserine modification. Residue Tyr-372 is modified to Phosphotyrosine. Phosphoserine is present on Ser-379. The tract at residues 392–421 (EGASNYGAGPRSAYGNDSSTQPPYATSQAV) is disordered. Over residues 406–421 (GNDSSTQPPYATSQAV) the composition is skewed to polar residues.

In terms of assembly, interacts with sqd; the interaction is RNA-dependent and may be specific for sqd isoform A/sqdA. Interacts with otu; the interaction is RNA-independent.

The protein resides in the nucleus. It localises to the cytoplasm. This protein is a component of ribonucleosomes. Could be needed to organize a concentration gradient of a dorsalizing morphogen (Dm) originating in the germinal vesicle. Interacts with grk mRNA (via 3' UTR) and involved in its localization to the dorsal anterior region of the oocyte during dorsal-ventral axis determination; may function as a ribonuclear protein complex together with sqd and otu. Required for polytene chromosome dispersal in nurse cells during oogenesis. May be involved in the regulation of splicing. The protein is Heterogeneous nuclear ribonucleoprotein 27C of Drosophila melanogaster (Fruit fly).